The following is a 706-amino-acid chain: Dihydroxyacetone synthase (706 aa).

Thiamine diphosphate contacts are provided by residues His-76 and 126–128 (GPL). Positions 167, 197, and 199 each coordinate Mg(2+). Asn-197 is a binding site for thiamine diphosphate. Thiamine diphosphate is bound by residues His-273, Glu-431, and Phe-459. Glu-431 acts as the Proton donor in catalysis. The Microbody targeting signal motif lies at 704 to 706 (NHL).

It belongs to the transketolase family. It depends on Mg(2+) as a cofactor. The cofactor is Ca(2+). Mn(2+) is required as a cofactor. Co(2+) serves as cofactor. Requires thiamine diphosphate as cofactor.

It is found in the peroxisome. It carries out the reaction D-xylulose 5-phosphate + formaldehyde = dihydroxyacetone + D-glyceraldehyde 3-phosphate. Involved in assimilation of formaldehyde. The protein is Dihydroxyacetone synthase (DAS1) of Candida boidinii (Yeast).